The primary structure comprises 431 residues: UDP-N-acetylglucosamine 1-carboxyvinyltransferase (431 aa).

Residue 25–26 coordinates phosphoenolpyruvate; sequence KN. Arg101 is a binding site for UDP-N-acetyl-alpha-D-glucosamine. Cys125 (proton donor) is an active-site residue. Cys125 bears the 2-(S-cysteinyl)pyruvic acid O-phosphothioketal mark. UDP-N-acetyl-alpha-D-glucosamine contacts are provided by Asp317 and Ile339.

It belongs to the EPSP synthase family. MurA subfamily.

The protein resides in the cytoplasm. It carries out the reaction phosphoenolpyruvate + UDP-N-acetyl-alpha-D-glucosamine = UDP-N-acetyl-3-O-(1-carboxyvinyl)-alpha-D-glucosamine + phosphate. It functions in the pathway cell wall biogenesis; peptidoglycan biosynthesis. In terms of biological role, cell wall formation. Adds enolpyruvyl to UDP-N-acetylglucosamine. This Thermobifida fusca (strain YX) protein is UDP-N-acetylglucosamine 1-carboxyvinyltransferase.